We begin with the raw amino-acid sequence, 224 residues long: Ribonuclease 3 (224 aa).

An RNase III domain is found at 4–127 (YSKLEKCLDY…IMGAIYLESG (124 aa)). E40 lines the Mg(2+) pocket. D44 is an active-site residue. Mg(2+)-binding residues include D113 and E116. E116 is an active-site residue. Residues 154 to 223 (DYKTALQEIT…AKIAIDKLKE (70 aa)) enclose the DRBM domain.

Belongs to the ribonuclease III family. As to quaternary structure, homodimer. It depends on Mg(2+) as a cofactor.

Its subcellular location is the cytoplasm. It catalyses the reaction Endonucleolytic cleavage to 5'-phosphomonoester.. Digests double-stranded RNA. Involved in the processing of primary rRNA transcript to yield the immediate precursors to the large and small rRNAs (23S and 16S). Processes some mRNAs, and tRNAs when they are encoded in the rRNA operon. Processes pre-crRNA and tracrRNA of type II CRISPR loci if present in the organism. The protein is Ribonuclease 3 of Aliarcobacter butzleri (strain RM4018) (Arcobacter butzleri).